A 493-amino-acid polypeptide reads, in one-letter code: Glutamyl-tRNA(Gln) amidotransferase subunit A (493 aa).

Catalysis depends on charge relay system residues lysine 79 and serine 159. Serine 183 (acyl-ester intermediate) is an active-site residue.

This sequence belongs to the amidase family. GatA subfamily. As to quaternary structure, heterotrimer of A, B and C subunits.

It carries out the reaction L-glutamyl-tRNA(Gln) + L-glutamine + ATP + H2O = L-glutaminyl-tRNA(Gln) + L-glutamate + ADP + phosphate + H(+). Allows the formation of correctly charged Gln-tRNA(Gln) through the transamidation of misacylated Glu-tRNA(Gln) in organisms which lack glutaminyl-tRNA synthetase. The reaction takes place in the presence of glutamine and ATP through an activated gamma-phospho-Glu-tRNA(Gln). This Rhizobium leguminosarum bv. trifolii (strain WSM2304) protein is Glutamyl-tRNA(Gln) amidotransferase subunit A.